The primary structure comprises 247 residues: HTH-type transcriptional regulator SarU (247 aa).

2 DNA-binding regions (H-T-H motif) span residues 53-76 (LKEIIGDILYKQSDVVKNIKSLSK) and 178-201 (LKDLFESIRFMYPQIVRSVNRLNN).

This sequence belongs to the SarA family.

The protein localises to the cytoplasm. In terms of biological role, positive regulator of RNAII and RNAIII in a cell density-dependent manner. It can contribute to the expression of virulence genes controlled by agr. May also regulate target genes via an agr-independent pathway. The protein is HTH-type transcriptional regulator SarU (sarU) of Staphylococcus aureus (strain NCTC 8325 / PS 47).